We begin with the raw amino-acid sequence, 701 residues long: Elongation factor G (701 aa).

One can recognise a tr-type G domain in the interval 8–290 (SLYRNIGISA…AVVELLPAPT (283 aa)). Residues 17–24 (AHIDAGKT), 88–92 (DTPGH), and 142–145 (NKMD) contribute to the GTP site.

It belongs to the TRAFAC class translation factor GTPase superfamily. Classic translation factor GTPase family. EF-G/EF-2 subfamily.

The protein localises to the cytoplasm. Functionally, catalyzes the GTP-dependent ribosomal translocation step during translation elongation. During this step, the ribosome changes from the pre-translocational (PRE) to the post-translocational (POST) state as the newly formed A-site-bound peptidyl-tRNA and P-site-bound deacylated tRNA move to the P and E sites, respectively. Catalyzes the coordinated movement of the two tRNA molecules, the mRNA and conformational changes in the ribosome. This Neisseria meningitidis serogroup B (strain ATCC BAA-335 / MC58) protein is Elongation factor G.